A 120-amino-acid polypeptide reads, in one-letter code: Large ribosomal subunit protein eL34x (120 aa).

Residues 31 to 50 are disordered; it reads TYQTTNKRASGPKCPVTGKR.

It belongs to the eukaryotic ribosomal protein eL34 family.

This chain is Large ribosomal subunit protein eL34x (RPL34C), found in Arabidopsis thaliana (Mouse-ear cress).